The chain runs to 434 residues: Fc receptor-like protein 6 (434 aa).

The N-terminal stretch at 1–19 is a signal peptide; the sequence is MLLWTAVLLFVPCVGKTVW. Ig-like C2-type domains are found at residues 20–95, 111–197, and 207–293; these read LYLQ…QTFT, PPVL…PQLE, and PVLT…KKLS. At 20-307 the chain is on the extracellular side; that stretch reads LYLQAWPNPV…QVLFTPASNW (288 aa). 3 cysteine pairs are disulfide-bonded: Cys-39–Cys-83, Cys-132–Cys-180, and Cys-228–Cys-276. Asn-65 is a glycosylation site (N-linked (GlcNAc...) asparagine). N-linked (GlcNAc...) asparagine glycosylation occurs at Asn-273. Residues 308–328 form a helical membrane-spanning segment; the sequence is LVPWLPASLLGLMVIAAALLV. Residues 329–434 lie on the Cytoplasmic side of the membrane; that stretch reads YVRSWRKAGP…PLSDCEEVLC (106 aa). Residues 369 to 374 carry the ITIM motif motif; the sequence is VVYSVV. Tyr-371 is subject to Phosphotyrosine.

As to quaternary structure, interacts (tyrosine phosphorylated) with PTPN11. Interacts (tyrosine phosphorylated) with PTPN6, INPP5D, INPPL1 and GRB2. Interacts with class II MHC HLA-DR when the alpha chain is associated with a beta-1, beta-4 or a beta-5 but not a beta-3 chain. In terms of processing, phosphorylated on Tyr residues. Tyrosine phosphorylation induces association with phosphatase PTPN11, PTPN6, INPP5D, INPPL1 and GRB2. In terms of tissue distribution, expressed by cytolytic cells including NK cells, effector and effector-memory CD8(+) T-cells, and a subset of NKT cells (at protein level). Also expressed in gamma delta T cells and in a rare subset of effector CD4(+) T-cells (at protein level). Expressed in spleen, skin, peripheral blood leukocytes, liver, lung, bone marrow, small intestine and placenta. Expression among T-cells is greatly expanded in HIV-1 infected individuals, and includes not only effector and effector-memory CD8(+) T-cells but also populations of CD4(+) T-cells. Expression among CD8(+) T-cells and NK cells is expanded in individuals with chronic lymphocytic leukemia (CLL) but is reduced in PBMCs from patients with acute (AML), chronic myeloid leukemia (CML) and non-Hodgkin's lymphoma. Expression is higher in PBMCs and/or CD3(+) cells of patients with autoimmune diseases, such as rheumatoid arthritis (RA), systemic lupus erythematosus (SLE) and idiopathic thrombocytopenia purpura (ITP). In contrast, expression in CD3(+) cells from patients with lupus anticoagulans (LA) is higher.

Its subcellular location is the cell membrane. Its function is as follows. Acts as a MHC class II receptor. When stimulated on its own, does not play a role in cytokine production or the release of cytotoxic granules by NK cells and cytotoxic CD8(+) T cells. Does not act as an Fc receptor. This is Fc receptor-like protein 6 (FCRL6) from Homo sapiens (Human).